The chain runs to 1264 residues: Valine--tRNA ligase (1264 aa).

Residue Ser2 is modified to N-acetylserine. One can recognise a GST C-terminal domain in the interval 89-219 (GSRAAVLVQQ…YSGARSVTQQ (131 aa)). The segment covering 218 to 230 (QQPGSEITAPQKT) has biased composition (polar residues). The tract at residues 218–296 (QQPGSEITAP…GEKKDVSGTM (79 aa)) is disordered. Composition is skewed to basic and acidic residues over residues 234–248 (LKKEAKKREKLEKFQ) and 260–275 (HGEKKPKPEKKEKRDP). The 'HIGH' region motif lies at 344-354 (PNVTGSLHLGH). Ser437 and Ser527 each carry phosphoserine. Lys645 is modified (N6-acetyllysine). Residues 862–866 (KMSKS) carry the 'KMSKS' region motif. Lys865 serves as a coordination point for ATP.

The protein belongs to the class-I aminoacyl-tRNA synthetase family. As to quaternary structure, forms high-molecular-mass aggregates with elongation factor 1.

The enzyme catalyses tRNA(Val) + L-valine + ATP = L-valyl-tRNA(Val) + AMP + diphosphate. Its activity is regulated as follows. Can be regulated by protein kinase C-dependent phosphorylation. This Rattus norvegicus (Rat) protein is Valine--tRNA ligase (Vars1).